The primary structure comprises 242 residues: Ribonuclease HII (242 aa).

The 214-residue stretch at 21–234 (KIIVGLDEAG…SKNLLKEIEE (214 aa)) folds into the RNase H type-2 domain. 3 residues coordinate a divalent metal cation: aspartate 27, glutamate 28, and aspartate 128.

Belongs to the RNase HII family. It depends on Mn(2+) as a cofactor. Requires Mg(2+) as cofactor.

The protein localises to the cytoplasm. The catalysed reaction is Endonucleolytic cleavage to 5'-phosphomonoester.. Endonuclease that specifically degrades the RNA of RNA-DNA hybrids. The sequence is that of Ribonuclease HII from Methanococcus maripaludis (strain DSM 14266 / JCM 13030 / NBRC 101832 / S2 / LL).